The chain runs to 416 residues: Serine hydroxymethyltransferase (416 aa).

Residues Leu-121 and 125 to 127 (GHL) each bind (6S)-5,6,7,8-tetrahydrofolate. At Lys-229 the chain carries N6-(pyridoxal phosphate)lysine.

This sequence belongs to the SHMT family. In terms of assembly, homodimer. The cofactor is pyridoxal 5'-phosphate.

Its subcellular location is the cytoplasm. It carries out the reaction (6R)-5,10-methylene-5,6,7,8-tetrahydrofolate + glycine + H2O = (6S)-5,6,7,8-tetrahydrofolate + L-serine. It participates in one-carbon metabolism; tetrahydrofolate interconversion. It functions in the pathway amino-acid biosynthesis; glycine biosynthesis; glycine from L-serine: step 1/1. Catalyzes the reversible interconversion of serine and glycine with tetrahydrofolate (THF) serving as the one-carbon carrier. This reaction serves as the major source of one-carbon groups required for the biosynthesis of purines, thymidylate, methionine, and other important biomolecules. Also exhibits THF-independent aldolase activity toward beta-hydroxyamino acids, producing glycine and aldehydes, via a retro-aldol mechanism. The chain is Serine hydroxymethyltransferase from Neisseria meningitidis serogroup C (strain 053442).